The primary structure comprises 212 residues: Large ribosomal subunit protein uL3 (212 aa).

Positions 134–155 (RNSHGNSLSHRAPGSIGQNQSP) are disordered. N5-methylglutamine is present on Q153.

Belongs to the universal ribosomal protein uL3 family. Part of the 50S ribosomal subunit. Forms a cluster with proteins L14 and L19. In terms of processing, methylated by PrmB.

Functionally, one of the primary rRNA binding proteins, it binds directly near the 3'-end of the 23S rRNA, where it nucleates assembly of the 50S subunit. The chain is Large ribosomal subunit protein uL3 from Pseudoalteromonas atlantica (strain T6c / ATCC BAA-1087).